We begin with the raw amino-acid sequence, 222 residues long: Putative N-acetylmannosamine-6-phosphate 2-epimerase (222 aa).

The protein belongs to the NanE family.

It catalyses the reaction an N-acyl-D-glucosamine 6-phosphate = an N-acyl-D-mannosamine 6-phosphate. It participates in amino-sugar metabolism; N-acetylneuraminate degradation; D-fructose 6-phosphate from N-acetylneuraminate: step 3/5. Converts N-acetylmannosamine-6-phosphate (ManNAc-6-P) to N-acetylglucosamine-6-phosphate (GlcNAc-6-P). This Staphylococcus aureus (strain bovine RF122 / ET3-1) protein is Putative N-acetylmannosamine-6-phosphate 2-epimerase.